Here is a 1387-residue protein sequence, read N- to C-terminus: DNA-directed RNA polymerase subunit beta (1387 aa).

Belongs to the RNA polymerase beta chain family. In terms of assembly, the RNAP catalytic core consists of 2 alpha, 1 beta, 1 beta' and 1 omega subunit. When a sigma factor is associated with the core the holoenzyme is formed, which can initiate transcription.

The enzyme catalyses RNA(n) + a ribonucleoside 5'-triphosphate = RNA(n+1) + diphosphate. Functionally, DNA-dependent RNA polymerase catalyzes the transcription of DNA into RNA using the four ribonucleoside triphosphates as substrates. This chain is DNA-directed RNA polymerase subunit beta, found in Xanthomonas campestris pv. campestris (strain 8004).